Reading from the N-terminus, the 203-residue chain is Small ribosomal subunit protein uS4 (203 aa).

The disordered stretch occupies residues 20–44; that stretch reads LPGLTRKRPKNTNPPGMHGAERKKK. One can recognise an S4 RNA-binding domain in the interval 92–155; the sequence is MRLDCIVFRL…SSRKLVAAYA (64 aa).

This sequence belongs to the universal ribosomal protein uS4 family. Part of the 30S ribosomal subunit. Contacts protein S5. The interaction surface between S4 and S5 is involved in control of translational fidelity.

Its function is as follows. One of the primary rRNA binding proteins, it binds directly to 16S rRNA where it nucleates assembly of the body of the 30S subunit. Functionally, with S5 and S12 plays an important role in translational accuracy. This chain is Small ribosomal subunit protein uS4, found in Synechococcus sp. (strain JA-2-3B'a(2-13)) (Cyanobacteria bacterium Yellowstone B-Prime).